The primary structure comprises 1439 residues: Myomesin-3 (1439 aa).

Residues 1-57 (MTLPHSPGSAGEPQASQTVQVHRLEHRQEEEQKEERQHSLQMGSSVQRRTYRSSEEE) form a disordered region. The span at 22–38 (HRLEHRQEEEQKEERQH) shows a compositional bias: basic and acidic residues. Over residues 39 to 48 (SLQMGSSVQR) the composition is skewed to polar residues. Residues 119 to 149 (QRLLRQRRDWKALRQRTEEKVREAKELIELC) are a coiled coil. Ig-like C2-type domains lie at 154 to 246 (PWFW…AKVL) and 269 to 362 (PSAE…AYVF). 5 consecutive Fibronectin type-III domains span residues 376-471 (SPLN…TGDY), 504-599 (APTN…LKGK), 605-698 (PPAQ…VKQA), 704-799 (APYD…CKEW), and 806-901 (PPYD…LEDK). Ig-like C2-type domains lie at 1122–1207 (PYFQ…LDLT) and 1336–1425 (AKVV…VTIS).

Homodimer. In terms of tissue distribution, mainly expressed in slow muscle, extraocular muscle and embryonic/neonatal skeletal muscle (at protein level). Expression in skeletal muscle is fiber type specific, with the highest levels in type IIA fibers (intermediate speed) and lower levels in type I fibers.

Its subcellular location is the cytoplasm. The protein resides in the myofibril. The protein localises to the sarcomere. It localises to the m line. In terms of biological role, may link the intermediate filament cytoskeleton to the M-disk of the myofibrils in striated muscle. This chain is Myomesin-3 (Myom3), found in Mus musculus (Mouse).